The chain runs to 1481 residues: Structural protein ORF147 (1481 aa).

2 disordered regions span residues 65–88 and 1319–1403; these read AEKR…ENLE and DEKL…PPIP. Composition is skewed to low complexity over residues 73–84, 1323–1336, and 1393–1403; these read KGSQKKSNSSSS, SSTV…SPKT, and SSRTTITPPIP.

The protein localises to the virion. The chain is Structural protein ORF147 from Noctuidae (owlet moths).